The sequence spans 88 residues: Toxin RelE3 (88 aa).

Belongs to the RelE toxin family. As to quaternary structure, forms heterodimers with RelB3 and possibly a heterotetramer RelE3-RelB3(2)-RelE3 from 2 heterodimers. The heterotetramer is probably not very stable in solution.

Its function is as follows. Toxic component of a type II toxin-antitoxin (TA) system. Has RNase activity. Is very toxic upon expression in E.coli. Its toxic activity is probably neutralized by the cognate antitoxin RelB3. The chain is Toxin RelE3 (relE3) from Methanocaldococcus jannaschii (strain ATCC 43067 / DSM 2661 / JAL-1 / JCM 10045 / NBRC 100440) (Methanococcus jannaschii).